A 407-amino-acid polypeptide reads, in one-letter code: Protein RecA (407 aa).

Position 79–86 (79–86 (GPESSGKT)) interacts with ATP. A disordered region spans residues 358 to 407 (LSLEASPEESDAKTLRRXASRGAGASSSRVQEGSAANDHFQDESTTAKLL). The span at 377–386 (SRGAGASSSR) shows a compositional bias: low complexity.

Belongs to the RecA family.

It is found in the cytoplasm. Functionally, can catalyze the hydrolysis of ATP in the presence of single-stranded DNA, the ATP-dependent uptake of single-stranded DNA by duplex DNA, and the ATP-dependent hybridization of homologous single-stranded DNAs. It interacts with LexA causing its activation and leading to its autocatalytic cleavage. In Treponema pallidum (strain Nichols), this protein is Protein RecA.